A 205-amino-acid polypeptide reads, in one-letter code: SREBP regulating gene protein (205 aa).

The Cytoplasmic portion of the chain corresponds to 1–16 (MALYVSMVWRKILRKR). Residues 17–35 (WVLGVVFGLSLIYFLTSTF) form a helical membrane-spanning segment. The Lumenal portion of the chain corresponds to 36–205 (KQEERTVRDR…GESPPELLPI (170 aa)). N-linked (GlcNAc...) asparagine glycosylation is present at Asn67.

It belongs to the SPRING family.

The protein resides in the golgi apparatus membrane. Its function is as follows. Positively regulates hepatic SREBP signaling pathway by modulating the proper localization of SCAP (SREBP cleavage-activating protein) to the endoplasmic reticulum, thereby controlling the level of functional SCAP. This Xenopus laevis (African clawed frog) protein is SREBP regulating gene protein.